A 233-amino-acid polypeptide reads, in one-letter code: ATP synthase subunit C lysine N-methyltransferase (233 aa).

Methionine 1 is modified (N-acetylmethionine). The helical transmembrane segment at 38–58 (FLLTGLVGGTLVAVYAVATPF) threads the bilayer. The required for mitochondrial location stretch occupies residues 56–90 (TPFVTPALRKVCLPFVPATTKQIENVVKMLRCRRG).

Belongs to the ANT/ATPSC lysine N-methyltransferase family. As to expression, ubiquitously expressed.

The protein localises to the mitochondrion membrane. The enzyme catalyses L-lysyl-[protein] + 3 S-adenosyl-L-methionine = N(6),N(6),N(6)-trimethyl-L-lysyl-[protein] + 3 S-adenosyl-L-homocysteine + 3 H(+). Its function is as follows. Mitochondrial protein-lysine N-methyltransferase that trimethylates ATP synthase subunit C, ATP5MC1 and ATP5MC2. Trimethylation is required for proper incorporation of the C subunit into the ATP synthase complex and mitochondrial respiration. Promotes chronic pain. Involved in persistent inflammatory and neuropathic pain: methyltransferase activity in the mitochondria of sensory neurons promotes chronic pain via a pathway that depends on the production of reactive oxygen species (ROS) and on the engagement of spinal cord microglia. The polypeptide is ATP synthase subunit C lysine N-methyltransferase (Homo sapiens (Human)).